The following is a 350-amino-acid chain: DNA-directed RNA polymerase subunit alpha (350 aa).

The alpha N-terminal domain (alpha-NTD) stretch occupies residues 1–226 (MLISQRPTLS…ELFGLARELN (226 aa)). Residues 241-350 (ADQAAHFALP…NQDYAETEQL (110 aa)) form an alpha C-terminal domain (alpha-CTD) region. A disordered region spans residues 328–350 (GTWNSDAGYDLEDNQDYAETEQL). The span at 336–350 (YDLEDNQDYAETEQL) shows a compositional bias: acidic residues.

The protein belongs to the RNA polymerase alpha chain family. Homodimer. The RNAP catalytic core consists of 2 alpha, 1 beta, 1 beta' and 1 omega subunit. When a sigma factor is associated with the core the holoenzyme is formed, which can initiate transcription.

The enzyme catalyses RNA(n) + a ribonucleoside 5'-triphosphate = RNA(n+1) + diphosphate. Its function is as follows. DNA-dependent RNA polymerase catalyzes the transcription of DNA into RNA using the four ribonucleoside triphosphates as substrates. The chain is DNA-directed RNA polymerase subunit alpha from Mycolicibacterium vanbaalenii (strain DSM 7251 / JCM 13017 / BCRC 16820 / KCTC 9966 / NRRL B-24157 / PYR-1) (Mycobacterium vanbaalenii).